We begin with the raw amino-acid sequence, 325 residues long: Cytosolic Fe-S cluster assembly factor Nubp1 homolog (325 aa).

The disordered stretch occupies residues 1 to 26 (MSSGADVPSDAPAHCPGTQSDDAGKA). Positions 15, 29, 32, and 38 each coordinate [4Fe-4S] cluster. 68 to 75 (GKGGVGKS) lines the ATP pocket. [4Fe-4S] cluster contacts are provided by Cys243 and Cys246.

It belongs to the Mrp/NBP35 ATP-binding proteins family. NUBP1/NBP35 subfamily. Heterotetramer of 2 Nubp1 and 2 Nubp2 chains. [4Fe-4S] cluster is required as a cofactor.

The protein localises to the cytoplasm. Functionally, component of the cytosolic iron-sulfur (Fe/S) protein assembly (CIA) machinery. Required for maturation of extramitochondrial Fe-S proteins. The Nubp1-Nubp2 heterotetramer forms a Fe-S scaffold complex, mediating the de novo assembly of an Fe-S cluster and its transfer to target apoproteins. The chain is Cytosolic Fe-S cluster assembly factor Nubp1 homolog from Anopheles gambiae (African malaria mosquito).